Reading from the N-terminus, the 654-residue chain is Potassium voltage-gated channel subfamily A member 4 (654 aa).

Topologically, residues M1–S305 are cytoplasmic. Positions Q24 to E145 are disordered. Positions S36–A50 are enriched in low complexity. Over residues G81 to Q99 the composition is skewed to basic residues. S122 carries the post-translational modification Phosphoserine. The span at S122 to E137 shows a compositional bias: acidic residues. A helical membrane pass occupies residues P306–L327. Residues E328 to P371 are Extracellular-facing. N-linked (GlcNAc...) asparagine glycosylation is present at N353. Residues F372–A393 traverse the membrane as a helical segment. At C394–I404 the chain is on the cytoplasmic side. The helical transmembrane segment at M405–A425 threads the bilayer. Over Q426–S440 the chain is Extracellular. A helical; Voltage-sensor transmembrane segment spans residues F441 to H461. Residues S462–M476 lie on the Cytoplasmic side of the membrane. The S4-S5 linker stretch occupies residues K463–M476. A helical membrane pass occupies residues R477 to Y498. Over F499–I512 the chain is Extracellular. Residues P513–T524 constitute an intramembrane region (helical). Residues T525–D530 carry the Selectivity filter motif. Residues T525 to K532 lie within the membrane without spanning it. At P533–K539 the chain is on the extracellular side. Residues I540–Y568 traverse the membrane as a helical segment. Topologically, residues H569–V654 are cytoplasmic. A Phosphoserine; by PKA modification is found at S600. Positions C630–K641 are enriched in basic and acidic residues. Residues C630–V654 form a disordered region. Positions T652–V654 match the PDZ-binding motif.

The protein belongs to the potassium channel family. A (Shaker) (TC 1.A.1.2) subfamily. Kv1.4/KCNA4 sub-subfamily. Homotetramer and heterotetramer of potassium channel proteins. Interacts with KCNAB1 and KCNAB2. Interacts with DLG1, DLG2 and DLG4 via their PDZ domains. Interacts with SIGMAR1. Detected in a complex with KCNA1. Interacts with KCNA2. Part of a complex containing KCNA1, KCNAB1 and LGI1. Interacts (via cytoplasmic N-terminal domain) with KCNRG. As to expression, expressed in the brain, lens and retina.

It localises to the cell membrane. The protein localises to the cell projection. The protein resides in the axon. It catalyses the reaction K(+)(in) = K(+)(out). Functionally, voltage-gated potassium channel that mediates transmembrane potassium transport in excitable membranes. Forms tetrameric potassium-selective channels through which potassium ions pass in accordance with their electrochemical gradient. The channel alternates between opened and closed conformations in response to the voltage difference across the membrane. Can form functional homotetrameric channels and heterotetrameric channels that contain variable proportions of KCNA1, KCNA2, KCNA4, KCNA5, and possibly other family members as well; channel properties depend on the type of alpha subunits that are part of the channel. Channel properties are modulated by cytoplasmic beta subunits that regulate the subcellular location of the alpha subunits and promote rapid inactivation. In vivo, membranes probably contain a mixture of heteromeric potassium channel complexes, making it difficult to assign currents observed in intact tissues to any particular potassium channel family member. Homotetrameric KCNA4 forms a potassium channel that opens in response to membrane depolarization, followed by rapid spontaneous channel closure. Likewise, a heterotetrameric channel formed by KCNA1 and KCNA4 shows rapid inactivation. This is Potassium voltage-gated channel subfamily A member 4 (Kcna4) from Mus musculus (Mouse).